The following is a 58-amino-acid chain: Teratocyte protein CftICK-III (58 aa).

Positions 1-24 (MQKFMRLFFLGLFFILFMTTQIKA) are cleaved as a signal peptide. Cystine bridges form between Cys-27–Cys-42, Cys-34–Cys-47, and Cys-41–Cys-55.

Abundantly expressed by teratocytes, which are extra-embryonic cells released by parasitoid wasps into their hosts during larval eclosion.

It localises to the secreted. Functionally, this endoparasitoid wasp peptide has immununosuppressive and insecticidal activities. Suppress cellular immunity which is detectable as a reduction of hemocyte encapsulation in the host. In vivo, ingestion of this peptide (probably at excessive doses) increases larval mortality and reduces leaf consumption in both lepidopteran species D.saccharalis and S.frugiperda, which are permissive and non-permissive hosts for C.flavipes, respectively. This chain is Teratocyte protein CftICK-III, found in Cotesia flavipes (Parasitic wasp).